A 207-amino-acid polypeptide reads, in one-letter code: Transcriptional regulatory protein RcsA (207 aa).

Positions isoleucine 131–aspartate 196 constitute an HTH luxR-type domain. The H-T-H motif DNA-binding region spans threonine 155–glycine 174.

The protein belongs to the RcsA family. Interacts with RcsB.

Its function is as follows. Component of the Rcs signaling system, which controls transcription of numerous genes. Binds, with RcsB, to the RcsAB box to regulate expression of genes. This Salmonella typhimurium (strain LT2 / SGSC1412 / ATCC 700720) protein is Transcriptional regulatory protein RcsA.